The chain runs to 587 residues: 5-aminolevulinate synthase, erythroid-specific, mitochondrial (587 aa).

The transit peptide at 1–49 directs the protein to the mitochondrion; sequence MVTAAMLLQRCPVLIRSPTGLLGKMIKTHQFLFGIGRCPILATQGPSFS. Residue arginine 163 participates in succinyl-CoA binding. Pyridoxal 5'-phosphate is bound by residues cysteine 258 and phenylalanine 259. Succinyl-CoA is bound by residues serine 280 and lysine 299. Pyridoxal 5'-phosphate is bound by residues serine 332, histidine 360, and threonine 388. Lysine 391 is an active-site residue. An N6-(pyridoxal phosphate)lysine modification is found at lysine 391. Positions 420 and 421 each coordinate pyridoxal 5'-phosphate. Position 508 (threonine 508) interacts with succinyl-CoA.

It belongs to the class-II pyridoxal-phosphate-dependent aminotransferase family. As to quaternary structure, homodimer. Interacts with SUCLA2. Requires pyridoxal 5'-phosphate as cofactor.

The protein resides in the mitochondrion inner membrane. The catalysed reaction is succinyl-CoA + glycine + H(+) = 5-aminolevulinate + CO2 + CoA. It functions in the pathway porphyrin-containing compound metabolism; protoporphyrin-IX biosynthesis; 5-aminolevulinate from glycine: step 1/1. Functionally, catalyzes the pyridoxal 5'-phosphate (PLP)-dependent condensation of succinyl-CoA and glycine to form aminolevulinic acid (ALA), with CoA and CO2 as by-products. Contributes significantly to heme formation during erythropoiesis. In Bos taurus (Bovine), this protein is 5-aminolevulinate synthase, erythroid-specific, mitochondrial (ALAS2).